Consider the following 637-residue polypeptide: MEYLAGNYDVIVVGAGHAGCEAALAAARMGGRTLLITLSLDNIAHMDCNPSLGGPAKGHLVREIDALGGQMGITADETSLQVRMLNTGKGPAVHALRIQSDKQAYHLHMRNAILGQENLVLHQALVERIKTEDGKVSGVVTRTGAFYAAPNVILTSGTYLRGRIIIGDTMYEGGPNGQQTAMNLSGALKELGLELGRFKTGTPPRIHRRSVDYTKFTVQPGDSVPWRYSFMPTQSMFWGRDVDKQIPCWLGYTTPETHQIIQDNIHRAPLYSGKIEGIGPRYCPSIEDKVVRFADRPTHQIFLEPEGWNSDELYMAGLSTSMPEEIQYDIIHSIPGLEKAELLRPGYAIEYDYVKPYQLSLSLEVRKIPGLFTAGQLNGTSGYEEAAAQGLLAGINAALRVQGKEPFIVRRSEGYLGVLIDDLVNKGVKEPYRLLTSRAEYRLILRQDNADLRLTPRGREIGLVKDERWAAFQKKKAAIAEINALWRGTTFSPLNEHLAEVLAGVHSAPVHGGISGEELMRRPEITINEIKQLIPQLAEYDEEALLEAGIEIKYAGYIEKQLAEIERFAKMEERMIPEEIVYDQIKGLSTEGRQRLKEVAPANMGQATRITGVTPADISVLLVYLEQKRRGGQIHAT.

14 to 19 (GAGHAG) is an FAD binding site. NAD(+) is bound at residue 279–293 (GPRYCPSIEDKVVRF).

The protein belongs to the MnmG family. Homodimer. Heterotetramer of two MnmE and two MnmG subunits. FAD serves as cofactor.

The protein resides in the cytoplasm. In terms of biological role, NAD-binding protein involved in the addition of a carboxymethylaminomethyl (cmnm) group at the wobble position (U34) of certain tRNAs, forming tRNA-cmnm(5)s(2)U34. This is tRNA uridine 5-carboxymethylaminomethyl modification enzyme MnmG from Desulfitobacterium hafniense (strain DSM 10664 / DCB-2).